The chain runs to 1302 residues: DNA-directed RNA polymerase subunit beta (1302 aa).

It belongs to the RNA polymerase beta chain family. The RNAP catalytic core consists of 2 alpha, 1 beta, 1 beta' and 1 omega subunit. When a sigma factor is associated with the core the holoenzyme is formed, which can initiate transcription.

It carries out the reaction RNA(n) + a ribonucleoside 5'-triphosphate = RNA(n+1) + diphosphate. In terms of biological role, DNA-dependent RNA polymerase catalyzes the transcription of DNA into RNA using the four ribonucleoside triphosphates as substrates. This is DNA-directed RNA polymerase subunit beta from Spiroplasma citri.